A 309-amino-acid chain; its full sequence is Acetylglutamate kinase (309 aa).

Substrate-binding positions include 69-70 (GG), Arg-91, and Asn-194.

This sequence belongs to the acetylglutamate kinase family. ArgB subfamily.

It localises to the cytoplasm. The catalysed reaction is N-acetyl-L-glutamate + ATP = N-acetyl-L-glutamyl 5-phosphate + ADP. Its pathway is amino-acid biosynthesis; L-arginine biosynthesis; N(2)-acetyl-L-ornithine from L-glutamate: step 2/4. Functionally, catalyzes the ATP-dependent phosphorylation of N-acetyl-L-glutamate. The polypeptide is Acetylglutamate kinase (Vesicomyosocius okutanii subsp. Calyptogena okutanii (strain HA)).